Consider the following 315-residue polypeptide: Prephenate dehydratase (315 aa).

Residues Arg-3–Val-189 enclose the Prephenate dehydratase domain. Positions Ser-203 to Pro-280 constitute an ACT domain.

As to quaternary structure, homodimer.

The catalysed reaction is prephenate + H(+) = 3-phenylpyruvate + CO2 + H2O. It functions in the pathway amino-acid biosynthesis; L-phenylalanine biosynthesis; phenylpyruvate from prephenate: step 1/1. The chain is Prephenate dehydratase (pheA) from Mycobacterium ulcerans (strain Agy99).